The following is a 646-amino-acid chain: Long-chain fatty acid transport protein 1 (646 aa).

Residues 1 to 13 (MRTPGAGTASVAS) are Extracellular-facing. A helical transmembrane segment spans residues 14–34 (LGLLWLLGLPWTWSAAAAFGV). Residues 35-646 (YVGSGGWRFL…ARICAGDFSL (612 aa)) are Cytoplasmic-facing. The tract at residues 191-475 (EVSEQLGKSL…YVSDSATNKK (285 aa)) is sufficient for oligomerization. 246–257 (YIYTSGTTGLPK) is an AMP binding site.

This sequence belongs to the ATP-dependent AMP-binding enzyme family. In terms of assembly, self-associates. May function as a homodimer. Interacts with EPRS1; mediates the translocation of SLC27A1 from the cytoplasm to the plasma membrane thereby increasing the uptake of long-chain fatty acids. Interacts with DGAT2 and this interaction is enhanced in the presence of ZFYVE1. As to expression, expressed in muscle.

The protein localises to the cell membrane. It localises to the endomembrane system. Its subcellular location is the cytoplasm. The enzyme catalyses a fatty acid(in) = a fatty acid(out). The catalysed reaction is (9Z)-octadecenoate(out) = (9Z)-octadecenoate(in). It catalyses the reaction hexadecanoate(out) = hexadecanoate(in). It carries out the reaction (5Z,8Z,11Z,14Z)-eicosatetraenoate(out) = (5Z,8Z,11Z,14Z)-eicosatetraenoate(in). The enzyme catalyses (9Z,12Z)-octadecadienoate(out) = (9Z,12Z)-octadecadienoate(in). The catalysed reaction is a long-chain fatty acid + ATP + CoA = a long-chain fatty acyl-CoA + AMP + diphosphate. It catalyses the reaction (5Z,8Z,11Z,14Z)-eicosatetraenoate + ATP + CoA = (5Z,8Z,11Z,14Z)-eicosatetraenoyl-CoA + AMP + diphosphate. It carries out the reaction a very long-chain fatty acid + ATP + CoA = a very long-chain fatty acyl-CoA + AMP + diphosphate. The enzyme catalyses tetracosanoate + ATP + CoA = tetracosanoyl-CoA + AMP + diphosphate. Its activity is regulated as follows. Inhibited by Triacsin C. Functionally, mediates the import of long-chain fatty acids (LCFA) into the cell by facilitating their transport at the plasma membrane. Also functions as an acyl-CoA ligase catalyzing the ATP-dependent formation of fatty acyl-CoA using LCFA and very-long-chain fatty acids (VLCFA) as substrates, which prevents fatty acid efflux from cells and might drive more fatty acid uptake. May act directly as a bona fide transporter, or alternatively, in a cytoplasmic or membrane-associated multimeric protein complex to trap and draw fatty acids towards accumulation. Plays a pivotal role in regulating available LCFA substrates from exogenous sources in tissues undergoing high levels of beta-oxidation or triglyceride synthesis. May be involved in regulation of cholesterol metabolism. Probably involved in fatty acid transport across the blood barrier. The sequence is that of Long-chain fatty acid transport protein 1 from Rattus norvegicus (Rat).